Reading from the N-terminus, the 161-residue chain is Lipoprotein signal peptidase (161 aa).

4 helical membrane passes run 11 to 31 (PLFW…KLWV), 44 to 64 (LWSG…FSAF), 66 to 86 (GGAG…IIFA), and 100 to 120 (GCIL…GHVI). Catalysis depends on residues aspartate 121 and aspartate 137. The helical transmembrane segment at 135 to 155 (LADVSINIGIAALLWASFFPV) threads the bilayer.

It belongs to the peptidase A8 family.

The protein resides in the cell inner membrane. The enzyme catalyses Release of signal peptides from bacterial membrane prolipoproteins. Hydrolyzes -Xaa-Yaa-Zaa-|-(S,diacylglyceryl)Cys-, in which Xaa is hydrophobic (preferably Leu), and Yaa (Ala or Ser) and Zaa (Gly or Ala) have small, neutral side chains.. The protein operates within protein modification; lipoprotein biosynthesis (signal peptide cleavage). This protein specifically catalyzes the removal of signal peptides from prolipoproteins. In Synechocystis sp. (strain ATCC 27184 / PCC 6803 / Kazusa), this protein is Lipoprotein signal peptidase.